A 43-amino-acid chain; its full sequence is Protein PsbN (43 aa).

A helical transmembrane segment spans residues 5–25 (TLISVFVASLVIGITAYAIFV).

The protein belongs to the PsbN family.

Its subcellular location is the plastid. It is found in the chloroplast thylakoid membrane. May play a role in photosystem I and II biogenesis. The polypeptide is Protein PsbN (Cyanidioschyzon merolae (strain NIES-3377 / 10D) (Unicellular red alga)).